The primary structure comprises 275 residues: Large ribosomal subunit protein uL2 (275 aa).

Residues 214 to 275 are disordered; it reads RWRGNRPTVR…NKFILSHRNK (62 aa). Positions 255 to 275 are enriched in basic residues; it reads KGKKTRSNKRTNKFILSHRNK.

It belongs to the universal ribosomal protein uL2 family. Part of the 50S ribosomal subunit. Forms a bridge to the 30S subunit in the 70S ribosome.

Its function is as follows. One of the primary rRNA binding proteins. Required for association of the 30S and 50S subunits to form the 70S ribosome, for tRNA binding and peptide bond formation. It has been suggested to have peptidyltransferase activity; this is somewhat controversial. Makes several contacts with the 16S rRNA in the 70S ribosome. This Blochmanniella pennsylvanica (strain BPEN) protein is Large ribosomal subunit protein uL2.